A 338-amino-acid chain; its full sequence is Gibberellin 2-beta-dioxygenase 8 (338 aa).

Positions 191–290 constitute a Fe2OG dioxygenase domain; sequence NTCYLRMNRY…RFSTAYFMCP (100 aa). Fe cation-binding residues include histidine 215, aspartate 217, and histidine 271. Residue arginine 281 is part of the active site. Arginine 281 contributes to the 2-oxoglutarate binding site.

It belongs to the iron/ascorbate-dependent oxidoreductase family. GA2OX subfamily. Requires Fe(2+) as cofactor.

It carries out the reaction gibberellin A1 + 2-oxoglutarate + O2 = gibberellin A8 + succinate + CO2. Its pathway is plant hormone biosynthesis; gibberellin biosynthesis. Catalyzes the 2-beta-hydroxylation of gibberellins (GA) precursors, rendering them unable to be converted to active GAs. Hydroxylates the C20-GA GA12 and GA53, but is not active on C19-GAs, like GA1, GA4, GA9 and GA20. The protein is Gibberellin 2-beta-dioxygenase 8 (GA2OX8) of Arabidopsis thaliana (Mouse-ear cress).